Here is a 135-residue protein sequence, read N- to C-terminus: Transcriptional activator protein (135 aa).

The Nuclear localization signal motif lies at 17 to 32 (KIQHHIAKKRQVRRRR). A zinc finger lies at 37-54 (CGCSYYIHLDCINHGFTH). The segment at 120 to 135 (HLDDLTVSDWSFFKSL) is transactivation.

The protein belongs to the geminiviridae transcriptional activator protein family. Monomer. Homodimer. Homooligomer. Self-interaction correlates with nuclear localization and efficient activation of transcription. Monomers suppress local silencing by interacting with and inactivating host adenosine kinase 2 (ADK2) in the cytoplasm. Interacts with and inhibits host SNF1 kinase. Binds to ssDNA. May interact with host RPS27A. Phosphorylated.

The protein localises to the host nucleus. It is found in the host cytoplasm. Its function is as follows. Multifunctional protein that modulates host antiviral defenses and promotes host attractiveness to insect vectors. Acts as a suppressor of RNA-mediated gene silencing, also known as post-transcriptional gene silencing (PTGS), a mechanism of plant viral defense that limits the accumulation of viral RNAs. TrAP suppresses the host RNA silencing by inhibiting adenosine kinase 2 (ADK2), a kinase involved in a general methylation pathway. Also suppresses the host basal defense by interacting with and inhibiting SNF1 kinase, a key regulator of cell metabolism implicated in innate antiviral defense. In terms of biological role, inhibits signal transduction by the phytohormone jasmonate, making the infected plant more attractive to aphids, which are the second host to play a role as a dissemination vector. Acts by binding to ubiquitin precursor RPS27A, thereby preventing ubiquitin degradation of JAZ. This Tomato yellow leaf curl Sardinia virus (isolate Spain-1) (TYLCSV) protein is Transcriptional activator protein.